Here is a 415-residue protein sequence, read N- to C-terminus: Serine hydroxymethyltransferase (415 aa).

(6S)-5,6,7,8-tetrahydrofolate is bound by residues Leu121 and 125–127 (GHL). Lys230 carries the N6-(pyridoxal phosphate)lysine modification.

The protein belongs to the SHMT family. Homodimer. Pyridoxal 5'-phosphate is required as a cofactor.

The protein localises to the cytoplasm. It catalyses the reaction (6R)-5,10-methylene-5,6,7,8-tetrahydrofolate + glycine + H2O = (6S)-5,6,7,8-tetrahydrofolate + L-serine. It functions in the pathway one-carbon metabolism; tetrahydrofolate interconversion. The protein operates within amino-acid biosynthesis; glycine biosynthesis; glycine from L-serine: step 1/1. Catalyzes the reversible interconversion of serine and glycine with tetrahydrofolate (THF) serving as the one-carbon carrier. This reaction serves as the major source of one-carbon groups required for the biosynthesis of purines, thymidylate, methionine, and other important biomolecules. Also exhibits THF-independent aldolase activity toward beta-hydroxyamino acids, producing glycine and aldehydes, via a retro-aldol mechanism. The sequence is that of Serine hydroxymethyltransferase from Syntrophomonas wolfei subsp. wolfei (strain DSM 2245B / Goettingen).